The chain runs to 133 residues: Small ribosomal subunit protein uS8 (133 aa).

A disordered region spans residues 1 to 28; that stretch reads MANHDPISDMLTRIRNASEKRHEKTKVP. The span at 16–26 shows a compositional bias: basic and acidic residues; sequence NASEKRHEKTK.

This sequence belongs to the universal ribosomal protein uS8 family. In terms of assembly, part of the 30S ribosomal subunit. Contacts proteins S5 and S12.

In terms of biological role, one of the primary rRNA binding proteins, it binds directly to 16S rRNA central domain where it helps coordinate assembly of the platform of the 30S subunit. The sequence is that of Small ribosomal subunit protein uS8 from Prochlorococcus marinus (strain NATL2A).